Consider the following 60-residue polypeptide: Sec-independent protein translocase protein TatA (60 aa).

A helical transmembrane segment spans residues 1–21 (MAGLGVTELLIILAIVIVLFG).

It belongs to the TatA/E family. As to quaternary structure, forms a complex with TatC.

The protein resides in the cell membrane. Part of the twin-arginine translocation (Tat) system that transports large folded proteins containing a characteristic twin-arginine motif in their signal peptide across membranes. TatA could form the protein-conducting channel of the Tat system. This Herpetosiphon aurantiacus (strain ATCC 23779 / DSM 785 / 114-95) protein is Sec-independent protein translocase protein TatA.